A 307-amino-acid polypeptide reads, in one-letter code: Transaldolase (307 aa).

Lys125 (schiff-base intermediate with substrate) is an active-site residue.

It belongs to the transaldolase family. Type 1 subfamily.

The protein localises to the cytoplasm. The enzyme catalyses D-sedoheptulose 7-phosphate + D-glyceraldehyde 3-phosphate = D-erythrose 4-phosphate + beta-D-fructose 6-phosphate. Its pathway is carbohydrate degradation; pentose phosphate pathway; D-glyceraldehyde 3-phosphate and beta-D-fructose 6-phosphate from D-ribose 5-phosphate and D-xylulose 5-phosphate (non-oxidative stage): step 2/3. Its function is as follows. Transaldolase is important for the balance of metabolites in the pentose-phosphate pathway. In Pseudomonas aeruginosa (strain ATCC 15692 / DSM 22644 / CIP 104116 / JCM 14847 / LMG 12228 / 1C / PRS 101 / PAO1), this protein is Transaldolase.